A 475-amino-acid polypeptide reads, in one-letter code: Aspartyl/glutamyl-tRNA(Asn/Gln) amidotransferase subunit B (475 aa).

This sequence belongs to the GatB/GatE family. GatB subfamily. Heterotrimer of A, B and C subunits.

The enzyme catalyses L-glutamyl-tRNA(Gln) + L-glutamine + ATP + H2O = L-glutaminyl-tRNA(Gln) + L-glutamate + ADP + phosphate + H(+). The catalysed reaction is L-aspartyl-tRNA(Asn) + L-glutamine + ATP + H2O = L-asparaginyl-tRNA(Asn) + L-glutamate + ADP + phosphate + 2 H(+). Allows the formation of correctly charged Asn-tRNA(Asn) or Gln-tRNA(Gln) through the transamidation of misacylated Asp-tRNA(Asn) or Glu-tRNA(Gln) in organisms which lack either or both of asparaginyl-tRNA or glutaminyl-tRNA synthetases. The reaction takes place in the presence of glutamine and ATP through an activated phospho-Asp-tRNA(Asn) or phospho-Glu-tRNA(Gln). The sequence is that of Aspartyl/glutamyl-tRNA(Asn/Gln) amidotransferase subunit B from Pediococcus pentosaceus (strain ATCC 25745 / CCUG 21536 / LMG 10740 / 183-1w).